A 359-amino-acid chain; its full sequence is Putative nucleotidyltransferase MAB21L1 (359 aa).

Residues 23-24 (RK) and 63-66 (YEGL) contribute to the a ribonucleoside 5'-triphosphate site. Residues glutamate 73 and glutamate 75 each contribute to the Mg(2+) site. A ribonucleoside 5'-triphosphate is bound by residues lysine 248 and 252 to 255 (SILK).

This sequence belongs to the mab-21 family. As to quaternary structure, monomer. Homodecamer; composed of 2 back to back homopentamers. The protein may exist as monomer in solution and oiligomerizes upon ligand binding.

Its subcellular location is the nucleus. Functionally, putative nucleotidyltransferase required for several aspects of embryonic development including normal development of the eye. It is unclear whether it displays nucleotidyltransferase activity in vivo. Binds single-stranded RNA (ssRNA). The chain is Putative nucleotidyltransferase MAB21L1 (MAB21L1) from Bos taurus (Bovine).